The primary structure comprises 572 residues: MLRNCLRKLGNHQTKCSVKTLHTPIYRTKNLQVLRDTLSGIKLLEKIITSSSYNKTLIYEPKYKSKPQVVSSHDTMRLHNVMRELLDSLQVDEATNTRLQSNRPRKLGRVGLQLFMDCIQDNLTATSTSLTCSLLEHYFKYPEKEVTNGIKAGLRYIRDFLAKNKIIVKSQNDVDALVEQLTMSSSDSQSIKRVLKAINYELFSDDIVRVINGNKTYDEVDVSKGWKYPAGILDSNEAYLRSLELPTKKLVSIDKDMLVLMYDGTLRDANKILPTITYARKLRKSVLLIVNGDCTGDALTSVTINNNRNKRENNESRIVVLKYSKKANNDLAPQENLDFIKFLRLPCGYDSIYSPEYSPLVPSKMCADKYYGSIESIKATTGEAFLYNSIDAEAIPNKVPKSFLQNTVTLSIGGHNEIEIDRRRNAIDNCLNNVLCHGLAKGFIPGYGISLLKAIPGLNELKANEPNFMTKVGINAVLSAVILPSEVAFKNAYGYNYYEINSLIAGAINEKSFPMAKFSPNSEPVNTVKDGNLEPWSKMDSCLAGVETFIELLTSCNTIITCVYKKPERHKA.

The N-terminal 16 residues, 1 to 16, are a transit peptide targeting the mitochondrion; the sequence is MLRNCLRKLGNHQTKC. The Mitochondrial matrix segment spans residues 17-471; the sequence is SVKTLHTPIY…KANEPNFMTK (455 aa). Residues 472–488 form a helical membrane-spanning segment; that stretch reads VGINAVLSAVILPSEVA. Residues 489-572 are Mitochondrial intermembrane-facing; that stretch reads FKNAYGYNYY…VYKKPERHKA (84 aa).

It belongs to the chaperonin (HSP60) family. In terms of assembly, forms a high molecular mass protein complex of approximately 850 kDa.

Its subcellular location is the mitochondrion inner membrane. Chaperone. Required for the assembly of succinate dehydrogenase subunits. Ensures mitochondrial gene expression at elevated temperatures and prevents heat-aggregation of the ribosomal subunit VAR1. The sequence is that of Mitochondrial chaperone TCM62 (TCM62) from Saccharomyces cerevisiae (strain ATCC 204508 / S288c) (Baker's yeast).